The primary structure comprises 179 residues: MQVILKEDVVNLGYKDDIVTVKDGYGRNFLIPQGKAVIASESAKKVLAENLRQRAHKIAQIKKEAEEKAASMQGISLTIKAKTSSTGTIFGSVTNIQIAEELAKKGVEVDRKIIVLKPAVKEVGNYTAVVRLHKEVTVEIPFEVVSENETIIEAKPEEAPVPVAEEPTAETEQAEVAAE.

The interval 155-179 (KPEEAPVPVAEEPTAETEQAEVAAE) is disordered. Residues 167–179 (PTAETEQAEVAAE) are compositionally biased toward acidic residues.

The protein belongs to the bacterial ribosomal protein bL9 family.

In terms of biological role, binds to the 23S rRNA. In Porphyromonas gingivalis (strain ATCC BAA-308 / W83), this protein is Large ribosomal subunit protein bL9.